Reading from the N-terminus, the 217-residue chain is Small ribosomal subunit protein uS3 (217 aa).

Positions I40–R110 constitute a KH type-2 domain.

Belongs to the universal ribosomal protein uS3 family. In terms of assembly, part of the 30S ribosomal subunit. Forms a tight complex with proteins S10 and S14.

In terms of biological role, binds the lower part of the 30S subunit head. Binds mRNA in the 70S ribosome, positioning it for translation. In Rickettsia massiliae (strain Mtu5), this protein is Small ribosomal subunit protein uS3.